The primary structure comprises 250 residues: DNA repair protein RecO (250 aa).

The protein belongs to the RecO family.

In terms of biological role, involved in DNA repair and RecF pathway recombination. The chain is DNA repair protein RecO from Lactobacillus helveticus (strain DPC 4571).